Consider the following 110-residue polypeptide: Large ribosomal subunit protein uL22 (110 aa).

Belongs to the universal ribosomal protein uL22 family. Part of the 50S ribosomal subunit.

This protein binds specifically to 23S rRNA; its binding is stimulated by other ribosomal proteins, e.g. L4, L17, and L20. It is important during the early stages of 50S assembly. It makes multiple contacts with different domains of the 23S rRNA in the assembled 50S subunit and ribosome. In terms of biological role, the globular domain of the protein is located near the polypeptide exit tunnel on the outside of the subunit, while an extended beta-hairpin is found that lines the wall of the exit tunnel in the center of the 70S ribosome. This is Large ribosomal subunit protein uL22 from Aliarcobacter butzleri (strain RM4018) (Arcobacter butzleri).